We begin with the raw amino-acid sequence, 1047 residues long: Isoleucine--tRNA ligase (1047 aa).

Positions 52–62 (PTANGMPGAHH) match the 'HIGH' region motif. Positions 600–604 (KMSKH) match the 'KMSKS' region motif. An ATP-binding site is contributed by lysine 603.

Belongs to the class-I aminoacyl-tRNA synthetase family. IleS type 2 subfamily. Monomer. Requires Zn(2+) as cofactor.

The protein resides in the cytoplasm. It catalyses the reaction tRNA(Ile) + L-isoleucine + ATP = L-isoleucyl-tRNA(Ile) + AMP + diphosphate. Its function is as follows. Catalyzes the attachment of isoleucine to tRNA(Ile). As IleRS can inadvertently accommodate and process structurally similar amino acids such as valine, to avoid such errors it has two additional distinct tRNA(Ile)-dependent editing activities. One activity is designated as 'pretransfer' editing and involves the hydrolysis of activated Val-AMP. The other activity is designated 'posttransfer' editing and involves deacylation of mischarged Val-tRNA(Ile). The polypeptide is Isoleucine--tRNA ligase (Streptomyces coelicolor (strain ATCC BAA-471 / A3(2) / M145)).